Consider the following 348-residue polypeptide: GTP 3',8-cyclase (348 aa).

The Radical SAM core domain maps to 24-242; the sequence is PFGRAVTYLR…EKQFTLTDID (219 aa). Arg-33 contacts GTP. The [4Fe-4S] cluster site is built by Cys-40 and Cys-44. Residue Tyr-46 participates in S-adenosyl-L-methionine binding. Cys-47 serves as a coordination point for [4Fe-4S] cluster. Position 82 (Arg-82) interacts with GTP. Gly-86 contacts S-adenosyl-L-methionine. A GTP-binding site is contributed by Thr-115. Ser-139 lines the S-adenosyl-L-methionine pocket. Lys-175 is a binding site for GTP. Met-209 is an S-adenosyl-L-methionine binding site. Positions 272 and 275 each coordinate [4Fe-4S] cluster. A GTP-binding site is contributed by 277–279; the sequence is RVR. A [4Fe-4S] cluster-binding site is contributed by Cys-289.

This sequence belongs to the radical SAM superfamily. MoaA family. Monomer and homodimer. The cofactor is [4Fe-4S] cluster.

It carries out the reaction GTP + AH2 + S-adenosyl-L-methionine = (8S)-3',8-cyclo-7,8-dihydroguanosine 5'-triphosphate + 5'-deoxyadenosine + L-methionine + A + H(+). It functions in the pathway cofactor biosynthesis; molybdopterin biosynthesis. Functionally, catalyzes the cyclization of GTP to (8S)-3',8-cyclo-7,8-dihydroguanosine 5'-triphosphate. This chain is GTP 3',8-cyclase, found in Rhizobium leguminosarum bv. trifolii (strain WSM2304).